We begin with the raw amino-acid sequence, 614 residues long: MHPLLNTITDPVKLRALDRKLLPQLADELRQFLVESVAKTGGHLSSNLGTVELTIALHYVFNTPYDRLVWDVGHQTYVHKILTGRREGMSKLRMRGGIAGFPRRDESEYDAFGTAHSSTSISAALGMAVASQWEGKKRSVVAVIGDGAMSAGMAFEALNNAGAMDTNLLVILNDNDMSISRPVGALNNYLARLMSGQFYATARRAGEKMLGVVPHVLELAKRAEEHVKGMVTPSTLFEEFGFNYIGPIDGHDLDVLVSTLNNIRNLRGPQFLHVVTRKGAGYKAAEDDPILYHGVTRFNPDAGIIPKASVKPSYTQVFGDWLCDMAALDQRLVGITPAMREGSGMVRFSHEYADRYFDVGIAEQHAVTFAAGLACDGLKPVVAIYSTFLQRAYDQLIHDVAIQNLPVVFAIDRAGLVGADGPTHAGSFDLTYLRCIPNITVMAPSDENECRQMLYTAFQMNTPAAVRYPRGSGSGVAQQKEMQMLPLGRGEIRREGAEIALLAFGSMLQPCLEAAEELNATVANMRFVKPLDDDLVASLAANHELLVTVEENTVMGGAGSAVLESLSARGRTVPVLQLGLPDTFLDQGDPSQMLSECGLDREGIVHAIRARFPK.

Thiamine diphosphate contacts are provided by residues histidine 74 and 115–117 (AHS). Aspartate 146 serves as a coordination point for Mg(2+). Thiamine diphosphate is bound by residues 147–148 (GA), asparagine 175, tyrosine 282, and glutamate 363. Asparagine 175 provides a ligand contact to Mg(2+).

It belongs to the transketolase family. DXPS subfamily. Homodimer. The cofactor is Mg(2+). Requires thiamine diphosphate as cofactor.

The enzyme catalyses D-glyceraldehyde 3-phosphate + pyruvate + H(+) = 1-deoxy-D-xylulose 5-phosphate + CO2. The protein operates within metabolic intermediate biosynthesis; 1-deoxy-D-xylulose 5-phosphate biosynthesis; 1-deoxy-D-xylulose 5-phosphate from D-glyceraldehyde 3-phosphate and pyruvate: step 1/1. Functionally, catalyzes the acyloin condensation reaction between C atoms 2 and 3 of pyruvate and glyceraldehyde 3-phosphate to yield 1-deoxy-D-xylulose-5-phosphate (DXP). The polypeptide is 1-deoxy-D-xylulose-5-phosphate synthase (Nitrosospira multiformis (strain ATCC 25196 / NCIMB 11849 / C 71)).